The sequence spans 773 residues: Beta-hexosaminidase B (773 aa).

The signal sequence occupies residues 1–19 (MKFNRLMALLFGVSSPLYA). Disulfide bonds link C46-C53, C389-C397, and C496-C542. E531 functions as the Proton donor in the catalytic mechanism.

Belongs to the glycosyl hydrolase 20 family.

It catalyses the reaction Hydrolysis of terminal non-reducing N-acetyl-D-hexosamine residues in N-acetyl-beta-D-hexosaminides.. In Pseudoalteromonas piscicida, this protein is Beta-hexosaminidase B (nag096).